A 515-amino-acid chain; its full sequence is 2-isopropylmalate synthase (515 aa).

A Pyruvate carboxyltransferase domain is found at V5–H267. 4 residues coordinate Mn(2+): D14, H202, H204, and N238. A regulatory domain region spans residues V392–H515.

It belongs to the alpha-IPM synthase/homocitrate synthase family. LeuA type 1 subfamily. In terms of assembly, homodimer. Mn(2+) serves as cofactor.

It is found in the cytoplasm. The enzyme catalyses 3-methyl-2-oxobutanoate + acetyl-CoA + H2O = (2S)-2-isopropylmalate + CoA + H(+). It participates in amino-acid biosynthesis; L-leucine biosynthesis; L-leucine from 3-methyl-2-oxobutanoate: step 1/4. In terms of biological role, catalyzes the condensation of the acetyl group of acetyl-CoA with 3-methyl-2-oxobutanoate (2-ketoisovalerate) to form 3-carboxy-3-hydroxy-4-methylpentanoate (2-isopropylmalate). The protein is 2-isopropylmalate synthase of Haemophilus influenzae (strain 86-028NP).